A 380-amino-acid chain; its full sequence is Chorismate synthase (380 aa).

Arg47 serves as a coordination point for NADP(+). Residues 124–126 (RSS), Gly288, 303–307 (KPTST), and Arg329 contribute to the FMN site.

Belongs to the chorismate synthase family. In terms of assembly, homotetramer. The cofactor is FMNH2.

It catalyses the reaction 5-O-(1-carboxyvinyl)-3-phosphoshikimate = chorismate + phosphate. Its pathway is metabolic intermediate biosynthesis; chorismate biosynthesis; chorismate from D-erythrose 4-phosphate and phosphoenolpyruvate: step 7/7. Functionally, catalyzes the anti-1,4-elimination of the C-3 phosphate and the C-6 proR hydrogen from 5-enolpyruvylshikimate-3-phosphate (EPSP) to yield chorismate, which is the branch point compound that serves as the starting substrate for the three terminal pathways of aromatic amino acid biosynthesis. This reaction introduces a second double bond into the aromatic ring system. The chain is Chorismate synthase from Leptospira borgpetersenii serovar Hardjo-bovis (strain JB197).